A 424-amino-acid polypeptide reads, in one-letter code: Enolase (424 aa).

Gln-162 serves as a coordination point for (2R)-2-phosphoglycerate. Residue Glu-204 is the Proton donor of the active site. Positions 241, 284, and 311 each coordinate Mg(2+). Residues Lys-336, Arg-365, Ser-366, and Lys-387 each contribute to the (2R)-2-phosphoglycerate site. The active-site Proton acceptor is Lys-336.

The protein belongs to the enolase family. Mg(2+) serves as cofactor.

It localises to the cytoplasm. It is found in the secreted. The protein localises to the cell surface. The catalysed reaction is (2R)-2-phosphoglycerate = phosphoenolpyruvate + H2O. It participates in carbohydrate degradation; glycolysis; pyruvate from D-glyceraldehyde 3-phosphate: step 4/5. In terms of biological role, catalyzes the reversible conversion of 2-phosphoglycerate (2-PG) into phosphoenolpyruvate (PEP). It is essential for the degradation of carbohydrates via glycolysis. This is Enolase from Rhizobium johnstonii (strain DSM 114642 / LMG 32736 / 3841) (Rhizobium leguminosarum bv. viciae).